Consider the following 201-residue polypeptide: Small ribosomal subunit protein uS4c (201 aa).

The disordered stretch occupies residues 15–44; that stretch reads LGALPGLTNKRPRAGSDLRNQSRSGKKSQY. Positions 89-149 constitute an S4 RNA-binding domain; it reads MRLDNILFRL…DEQKSRALIQ (61 aa).

This sequence belongs to the universal ribosomal protein uS4 family. As to quaternary structure, part of the 30S ribosomal subunit. Contacts protein S5. The interaction surface between S4 and S5 is involved in control of translational fidelity.

The protein resides in the plastid. It localises to the chloroplast. Its function is as follows. One of the primary rRNA binding proteins, it binds directly to 16S rRNA where it nucleates assembly of the body of the 30S subunit. Functionally, with S5 and S12 plays an important role in translational accuracy. The polypeptide is Small ribosomal subunit protein uS4c (rps4) (Helianthus annuus (Common sunflower)).